The following is a 282-amino-acid chain: Pantothenate synthetase (282 aa).

30–37 (MGYLHEGH) lines the ATP pocket. The active-site Proton donor is His37. Gln61 serves as a coordination point for (R)-pantoate. Position 61 (Gln61) interacts with beta-alanine. An ATP-binding site is contributed by 147 to 150 (GQKD). Residue Gln153 participates in (R)-pantoate binding. ATP contacts are provided by residues Val176 and 184–187 (LSSR).

The protein belongs to the pantothenate synthetase family. As to quaternary structure, homodimer.

The protein localises to the cytoplasm. The enzyme catalyses (R)-pantoate + beta-alanine + ATP = (R)-pantothenate + AMP + diphosphate + H(+). It participates in cofactor biosynthesis; (R)-pantothenate biosynthesis; (R)-pantothenate from (R)-pantoate and beta-alanine: step 1/1. Its function is as follows. Catalyzes the condensation of pantoate with beta-alanine in an ATP-dependent reaction via a pantoyl-adenylate intermediate. The sequence is that of Pantothenate synthetase from Desulfitobacterium hafniense (strain DSM 10664 / DCB-2).